The following is a 196-amino-acid chain: PRADC1-like protein (196 aa).

The signal sequence occupies residues 1-18; that stretch reads MLIAWLVLAATLSRSIRA. The PA domain occupies 73-171; it reads ITDPPGACQE…STLQRLKRVH (99 aa). An N-linked (GlcNAc...) asparagine glycan is attached at asparagine 179.

The protein localises to the secreted. In terms of biological role, may be involved in iversification of muscle cell fates. The polypeptide is PRADC1-like protein (Drosophila melanogaster (Fruit fly)).